We begin with the raw amino-acid sequence, 510 residues long: NAD(P)H-quinone oxidoreductase subunit 2 B, chloroplastic (510 aa).

Helical transmembrane passes span 24–44, 57–77, 99–119, 124–144, 149–169, 183–203, 227–247, 295–315, 323–343, 347–367, 395–415, 418–438, and 482–502; these read LLLF…GLIL, IPWL…ALLF, IFQF…VEYI, MAIT…MFLC, LITI…LSGY, YLLM…WLYG, PGIS…LSPA, WHLL…LIAI, MLAY…IVGD, GYAS…GTFA, ALSL…AGFF, LHLF…IGLL, and LSMI…NPII.

It belongs to the complex I subunit 2 family. As to quaternary structure, NDH is composed of at least 16 different subunits, 5 of which are encoded in the nucleus.

It is found in the plastid. The protein localises to the chloroplast thylakoid membrane. It carries out the reaction a plastoquinone + NADH + (n+1) H(+)(in) = a plastoquinol + NAD(+) + n H(+)(out). The enzyme catalyses a plastoquinone + NADPH + (n+1) H(+)(in) = a plastoquinol + NADP(+) + n H(+)(out). NDH shuttles electrons from NAD(P)H:plastoquinone, via FMN and iron-sulfur (Fe-S) centers, to quinones in the photosynthetic chain and possibly in a chloroplast respiratory chain. The immediate electron acceptor for the enzyme in this species is believed to be plastoquinone. Couples the redox reaction to proton translocation, and thus conserves the redox energy in a proton gradient. The polypeptide is NAD(P)H-quinone oxidoreductase subunit 2 B, chloroplastic (Cucumis sativus (Cucumber)).